The following is a 210-amino-acid chain: Pyrrolidone-carboxylate peptidase (210 aa).

Residues glutamate 80, cysteine 143, and histidine 162 contribute to the active site.

Belongs to the peptidase C15 family. In terms of assembly, homotetramer.

The protein resides in the cytoplasm. It carries out the reaction Release of an N-terminal pyroglutamyl group from a polypeptide, the second amino acid generally not being Pro.. Functionally, removes 5-oxoproline from various penultimate amino acid residues except L-proline. In Chromobacterium violaceum (strain ATCC 12472 / DSM 30191 / JCM 1249 / CCUG 213 / NBRC 12614 / NCIMB 9131 / NCTC 9757 / MK), this protein is Pyrrolidone-carboxylate peptidase.